The following is a 448-amino-acid chain: Glutamyl-tRNA reductase (448 aa).

Substrate is bound by residues 49–52, S109, 114–116, and Q120; these read TCNR and ETQ. C50 serves as the catalytic Nucleophile. NADP(+) is bound at residue 189-194; the sequence is GAGEMG.

Belongs to the glutamyl-tRNA reductase family. Homodimer.

It carries out the reaction (S)-4-amino-5-oxopentanoate + tRNA(Glu) + NADP(+) = L-glutamyl-tRNA(Glu) + NADPH + H(+). Its pathway is porphyrin-containing compound metabolism; protoporphyrin-IX biosynthesis; 5-aminolevulinate from L-glutamyl-tRNA(Glu): step 1/2. Its function is as follows. Catalyzes the NADPH-dependent reduction of glutamyl-tRNA(Glu) to glutamate 1-semialdehyde (GSA). This chain is Glutamyl-tRNA reductase, found in Staphylococcus epidermidis (strain ATCC 12228 / FDA PCI 1200).